Reading from the N-terminus, the 295-residue chain is Acetylglutamate kinase (295 aa).

Substrate contacts are provided by residues 66–67 (GG), arginine 88, and asparagine 193.

The protein belongs to the acetylglutamate kinase family. ArgB subfamily.

Its subcellular location is the cytoplasm. It catalyses the reaction N-acetyl-L-glutamate + ATP = N-acetyl-L-glutamyl 5-phosphate + ADP. Its pathway is amino-acid biosynthesis; L-arginine biosynthesis; N(2)-acetyl-L-ornithine from L-glutamate: step 2/4. Catalyzes the ATP-dependent phosphorylation of N-acetyl-L-glutamate. This chain is Acetylglutamate kinase, found in Afipia carboxidovorans (strain ATCC 49405 / DSM 1227 / KCTC 32145 / OM5) (Oligotropha carboxidovorans).